The chain runs to 91 residues: Cell division topological specificity factor (91 aa).

The protein belongs to the MinE family.

Prevents the cell division inhibition by proteins MinC and MinD at internal division sites while permitting inhibition at polar sites. This ensures cell division at the proper site by restricting the formation of a division septum at the midpoint of the long axis of the cell. In Bradyrhizobium sp. (strain BTAi1 / ATCC BAA-1182), this protein is Cell division topological specificity factor.